A 283-amino-acid polypeptide reads, in one-letter code: Nicotine 6-hydroxylase medium subunit (283 aa).

In terms of domain architecture, FAD-binding PCMH-type spans 1 to 176; sequence MKLPAIRYAS…TDVWIPSRPN (176 aa). FAD is bound by residues 31-35 and 110-114; these read AGGQS and TLGGS.

Heterotrimer composed of a large subunit (NdhL), a medium subunit (NdhM) and a small subunit (NdhS). FAD serves as cofactor.

The protein localises to the cytoplasm. It catalyses the reaction (R)-nicotine + A + H2O = (R)-6-hydroxynicotine + AH2. It carries out the reaction (S)-nicotine + A + H2O = (S)-6-hydroxynicotine + AH2. It functions in the pathway alkaloid degradation; nicotine degradation; 6-hydroxypseudooxynicotine from nicotine (R-isomer route): step 1/2. The protein operates within alkaloid degradation; nicotine degradation; 6-hydroxypseudooxynicotine from nicotine (S-isomer route): step 1/2. Its activity is regulated as follows. Nicotine dehydrogenase activity is inhibited by tungsten. Its function is as follows. Component of the nicotine 6-hydroxylase, which is involved in the degradation of nicotine. Catalyzes the hydroxylation of the pyridine ring at C6 to form 6-hydroxynicotine. Can use both L-nicotine and D-nicotine. The protein is Nicotine 6-hydroxylase medium subunit of Paenarthrobacter nicotinovorans (Arthrobacter nicotinovorans).